The primary structure comprises 466 residues: Soluble pyridine nucleotide transhydrogenase (466 aa).

36 to 45 (ERYHQVGGGC) contacts FAD.

It belongs to the class-I pyridine nucleotide-disulfide oxidoreductase family. It depends on FAD as a cofactor.

Its subcellular location is the cytoplasm. The catalysed reaction is NAD(+) + NADPH = NADH + NADP(+). In terms of biological role, conversion of NADPH, generated by peripheral catabolic pathways, to NADH, which can enter the respiratory chain for energy generation. This is Soluble pyridine nucleotide transhydrogenase from Colwellia psychrerythraea (strain 34H / ATCC BAA-681) (Vibrio psychroerythus).